Here is a 206-residue protein sequence, read N- to C-terminus: N-(5'-phosphoribosyl)anthranilate isomerase (206 aa).

It belongs to the TrpF family.

The catalysed reaction is N-(5-phospho-beta-D-ribosyl)anthranilate = 1-(2-carboxyphenylamino)-1-deoxy-D-ribulose 5-phosphate. It functions in the pathway amino-acid biosynthesis; L-tryptophan biosynthesis; L-tryptophan from chorismate: step 3/5. This is N-(5'-phosphoribosyl)anthranilate isomerase from Rubrobacter xylanophilus (strain DSM 9941 / JCM 11954 / NBRC 16129 / PRD-1).